The sequence spans 1393 residues: ABC transporter G family member 3 (1393 aa).

The span at 1-14 (MEDKNNIELQEKAP) shows a compositional bias: basic and acidic residues. Residues 1 to 68 (MEDKNNIELQ…IIYQNPTPAS (68 aa)) form a disordered region. Over residues 15 to 50 (DNYNNNNNNNNNNNNNNNNNNNNNNNNNNNNNNDIN) the composition is skewed to low complexity. Positions 100–353 (VSANNISYYI…YFSSIGLAPL (254 aa)) constitute an ABC transporter 1 domain. 144–151 (GIPGAGKS) provides a ligand contact to ATP. The region spanning 473–698 (MQYAVRFFQA…SYADGGYQGN (226 aa)) is the ABC transmembrane type-2 1 domain. Helical transmembrane passes span 479 to 499 (FFQAIFMGCVIGSLFVKMGFT), 509 to 529 (LVYFAMVLHIWTTIGSVEEFF), 558 to 578 (IPISLIEAILFSSCCYWIAGF), 585 to 605 (FIVFILGMALTNLIAQGIFQV), 615 to 635 (LASLICPAIVVLFMIMSGYMI), 640 to 660 (IPGWWIWLNALSPLRYVIDMV), and 724 to 744 (VDIVIILGFVCTFFFIFFLGV). One can recognise an ABC transporter 2 domain in the interval 783 to 1035 (MTFQNLNYVV…VIQHFTSAGY (253 aa)). An ATP-binding site is contributed by 828–835 (GPSGAGKS). Positions 1121–1388 (QTILLRFLRS…FLGYLALRFI (268 aa)) constitute an ABC transmembrane type-2 2 domain. The next 6 membrane-spanning stretches (helical) occupy residues 1122–1142 (TILLRFLRSFIPAIVIGTLFL), 1157–1177 (LVFLGFLFGGMASIGKVPTIV), 1206–1226 (LPMMVLTAFSYWIPMFFLTGL), 1235–1255 (FFFSLSVYLLVIMCYDSLATL), 1265–1285 (IAILVSGVGLNFLGLFGGFFI), and 1364–1384 (FYNLIILGGYFCAYTFLGYLA).

The protein belongs to the ABC transporter superfamily. ABCG family. PDR (TC 3.A.1.205) subfamily.

The protein resides in the membrane. The protein is ABC transporter G family member 3 (abcG3) of Dictyostelium discoideum (Social amoeba).